A 436-amino-acid polypeptide reads, in one-letter code: GTPase Der (436 aa).

2 consecutive EngA-type G domains span residues 3–168 and 177–352; these read PLIA…PESD and IRLA…DNRA. Residues 9 to 16, 56 to 60, 120 to 123, 183 to 190, 230 to 234, and 295 to 298 each bind GTP; these read GRPNVGKS, DTGGY, NKVE, DTAGL, and NKWD. Residues 353-436 enclose the KH-like domain; it reads RKISTSALNR…VTISLRFLQK (84 aa).

Belongs to the TRAFAC class TrmE-Era-EngA-EngB-Septin-like GTPase superfamily. EngA (Der) GTPase family. Associates with the 50S ribosomal subunit.

GTPase that plays an essential role in the late steps of ribosome biogenesis. This chain is GTPase Der, found in Chlorobium phaeovibrioides (strain DSM 265 / 1930) (Prosthecochloris vibrioformis (strain DSM 265)).